We begin with the raw amino-acid sequence, 734 residues long: Polyribonucleotide nucleotidyltransferase (734 aa).

2 residues coordinate Mg(2+): D497 and D503. A KH domain is found at 564–623 (PRIIHITIDPDKIRDVIGPGGKVIKKIVEETGAEIDIEDDGRVFIAAVDQEKGRKAQEII). Residues 633 to 707 (GEIYTGRVTR…SQGRLKLSKK (75 aa)) form the S1 motif domain. The tract at residues 700–734 (GRLKLSKKEATPPPESTAMKEGRAHRPSRRRESAR) is disordered. The segment covering 717-734 (AMKEGRAHRPSRRRESAR) has biased composition (basic and acidic residues).

It belongs to the polyribonucleotide nucleotidyltransferase family. The cofactor is Mg(2+).

It is found in the cytoplasm. It carries out the reaction RNA(n+1) + phosphate = RNA(n) + a ribonucleoside 5'-diphosphate. Its function is as follows. Involved in mRNA degradation. Catalyzes the phosphorolysis of single-stranded polyribonucleotides processively in the 3'- to 5'-direction. The chain is Polyribonucleotide nucleotidyltransferase from Pelotomaculum thermopropionicum (strain DSM 13744 / JCM 10971 / SI).